The following is a 341-amino-acid chain: MEPAFGEVNQLGGVFVNGRPLPNAIRLRIVELAQLGIRPCDISRQLRVSHGCVSKILARYNETGSILPGAIGGSKPRVTTPTVVKHIRTYKQRDPGIFAWEIRDRLLADGVCDKYNVPSVSSISRILRNKIGNLAQQGHYDSYKQHQPAPQPALPYNHIYSYPNPITAAAAKVPTPPGVPAIPGSVAMPRTWPSSHSVTDILGIRSITDQVSDSSPYHSPKVEEWSSLGRNNFPAAAPHAVNGLEKGTLEQETKYSQAPNGLPAVGSFVSASSMAPYPTPAQVSPYMTYSAAPSGYVAGHGWQHAGSTPLSPHNCDIPASLAFKGMQAVREGSHSVTASAL.

Residues 4 to 130 (AFGEVNQLGG…SSISRILRNK (127 aa)) constitute a DNA-binding region (paired). Residues 7–63 (EVNQLGGVFVNGRPLPNAIRLRIVELAQLGIRPCDISRQLRVSHGCVSKILARYNET) are PAI subdomain. Residues 82 to 130 (TVVKHIRTYKQRDPGIFAWEIRDRLLADGVCDKYNVPSVSSISRILRNK) are RED subdomain. The segment at 168 to 189 (AAAAKVPTPPGVPAIPGSVAMP) is interaction with KDM5B.

Interacts with KDM5B.

It localises to the nucleus. Transcription factor required for normal development of thymus, parathyroid glands, ultimobranchial bodies, teeth, skeletal elements of skull and larynx as well as distal limbs. In Callimico goeldii (Goeldi's marmoset), this protein is Paired box protein Pax-9 (PAX9).